The sequence spans 500 residues: Serine carboxypeptidase 3 (500 aa).

Residues Met-1–Ala-21 form the signal peptide. Residues Glu-22–Thr-73 constitute a propeptide that is removed on maturation. Cystine bridges form between Cys-126–Cys-366, Cys-294–Cys-309, and Cys-332–Cys-337. The N-linked (GlcNAc...) asparagine glycan is linked to Asn-144. Ser-216 is a catalytic residue. Residue Asp-404 is part of the active site. Cys-407 contributes to the substrate binding site. Residue His-461 is part of the active site. The propeptide occupies Glu-485 to Met-500.

It belongs to the peptidase S10 family. As to quaternary structure, monomer.

The catalysed reaction is Release of a C-terminal amino acid with broad specificity.. The protein is Serine carboxypeptidase 3 (CBP3) of Oryza sativa subsp. japonica (Rice).